The primary structure comprises 364 residues: NADH-quinone oxidoreductase subunit H (364 aa).

A run of 8 helical transmembrane segments spans residues 15 to 35 (LLVL…IAFL), 84 to 104 (AVFI…WAAI), 123 to 143 (VGVL…IMGG), 169 to 189 (IGFV…TTIV), 206 to 226 (YFPL…SALA), 257 to 277 (LFML…TILF), 302 to 322 (LSGL…FALV), and 341 to 361 (IFLP…TFVG).

The protein belongs to the complex I subunit 1 family. As to quaternary structure, NDH-1 is composed of 14 different subunits. Subunits NuoA, H, J, K, L, M, N constitute the membrane sector of the complex.

The protein resides in the cell inner membrane. It carries out the reaction a quinone + NADH + 5 H(+)(in) = a quinol + NAD(+) + 4 H(+)(out). In terms of biological role, NDH-1 shuttles electrons from NADH, via FMN and iron-sulfur (Fe-S) centers, to quinones in the respiratory chain. The immediate electron acceptor for the enzyme in this species is believed to be ubiquinone. Couples the redox reaction to proton translocation (for every two electrons transferred, four hydrogen ions are translocated across the cytoplasmic membrane), and thus conserves the redox energy in a proton gradient. This subunit may bind ubiquinone. This is NADH-quinone oxidoreductase subunit H from Hyphomonas neptunium (strain ATCC 15444).